Consider the following 938-residue polypeptide: Myocardin (938 aa).

Positions 12-27 (IRRKFRSVLQLRLQQR) match the MEF2C-binding motif. RPEL repeat units lie at residues 18-43 (SVLQ…PPLK), 62-87 (DSLR…QAST), and 106-131 (DDLN…PMDS). A disordered region spans residues 37–64 (GLIPPLKSPTEFHDPRKKLDSAKTEDSL). Residues 46 to 64 (TEFHDPRKKLDSAKTEDSL) show a composition bias toward basic and acidic residues. The tract at residues 153–205 (FEDDSSRDGLSPDQARSEDPQGSGGSTPDIKSTEAPLAGPLDTIQDLTPGSES) is HDAC5-binding. Disordered stretches follow at residues 155–282 (DDSS…PPPM) and 339–381 (NEQM…PLPP). The span at 210–221 (TASQLSNQSDSG) shows a compositional bias: polar residues. Over residues 248 to 265 (NRHKKPKDPKPKVKKLKY) the composition is skewed to basic residues. Low complexity predominate over residues 345–360 (NPNSSSTPLNNTPLSP). Residues 361–372 (VKNSLSGQTGVS) show a composition bias toward polar residues. The region spanning 383 to 417 (LDDLKVSELRQQLRIRGLPVSGTKTALVDRLRPFQ) is the SAP domain. Serine 457, serine 461, serine 465, and serine 469 each carry phosphoserine; by GSK3-beta. The interval 501–521 (ESLLSSLNGGSGPSEPDGLDS) is disordered. The stretch at 522 to 566 (EKDKMLVEKQKVINQLTWKLRQEQRQVEELRMQLQKQKSGCNDQK) forms a coiled coil. The segment at 586–606 (AAQQASGKGQGHSSDSPPPAC) is disordered. Polar residues predominate over residues 588 to 600 (QQASGKGQGHSSD). Serine 627, serine 631, serine 635, and serine 639 each carry phosphoserine; by GSK3-beta. 2 stretches are compositionally biased toward polar residues: residues 667-694 (GAQR…QSSD) and 701-713 (SIPS…SSPT). Residues 667-734 (GAQRENHGVS…DAVKQQMTRS (68 aa)) are disordered. Residues 717-938 (ITQPPSYEDA…SPMDLHLQQW (222 aa)) are required for interaction with and ubiquitination by STUB1. Phosphoserine; by MAPK1 and MAPK3 occurs at positions 815, 862, and 869. Threonine 896 is subject to Phosphothreonine; by MAPK1 and MAPK3.

As to quaternary structure, homodimer. Interacts with MLLT7/FOXO4. Interacts with SRF, its association does not depend on specific DNA sequences for ternary complex formation. Interacts (via C-terminal) with EP300 (via the CREB-binding domain). Interacts with HDAC4 and HDAC5. Interacts with MEF2C. Interacts (via C-terminus) with STUB1/CHIP. Interacts with PURB. Ubiquitinated; by STUB1/CHIP at the C-terminus, leading to its degradation by the proteasome. Phosphorylation by GSK3B is required for STUB1/CHIP-mediated ubiquitination. In terms of processing, phosphorylation negatively regulates transcriptional activity. Phosphorylated; by GSK3B. In terms of tissue distribution, abundantly expressed in the heart, aorta media and bladder, weakly expressed in the stomach, intestine and lung.

The protein localises to the nucleus. Its function is as follows. Smooth muscle cells (SM) and cardiac muscle cells-specific transcriptional factor which uses the canonical single or multiple CArG boxes DNA sequence. Acts as a cofactor of serum response factor (SRF) with the potential to modulate SRF-target genes. Plays a crucial role in cardiogenesis, urinary bladder development, and differentiation of the smooth muscle cell lineage (myogenesis). Positively regulates the transcription of genes involved in vascular smooth muscle contraction. This chain is Myocardin (Myocd), found in Rattus norvegicus (Rat).